Here is a 218-residue protein sequence, read N- to C-terminus: Ubiquitin-conjugating enzyme E2-24 kDa (218 aa).

The UBC core domain occupies 3–148 (SSKRRIETDV…IKEYIDKYAT (146 aa)). Cys-85 serves as the catalytic Glycyl thioester intermediate. The disordered stretch occupies residues 154 to 218 (QMFGGDNDSD…DDDYDEVANQ (65 aa)). 2 stretches are compositionally biased toward acidic residues: residues 160 to 183 (NDSD…EDMD) and 192 to 218 (DSVD…VANQ).

Belongs to the ubiquitin-conjugating enzyme family.

It localises to the cytoplasm. It catalyses the reaction S-ubiquitinyl-[E1 ubiquitin-activating enzyme]-L-cysteine + [E2 ubiquitin-conjugating enzyme]-L-cysteine = [E1 ubiquitin-activating enzyme]-L-cysteine + S-ubiquitinyl-[E2 ubiquitin-conjugating enzyme]-L-cysteine.. The protein operates within protein modification; protein ubiquitination. Catalyzes the covalent attachment of ubiquitin to other proteins. Required for the adaptation to the presence of glucose in the growth medium; mediates the degradation of enzymes involved in gluconeogenesis when cells are shifted to glucose-containing medium. Required for proteasome-dependent catabolite degradation of fructose-1,6-bisphosphatase (FBP1). In Saccharomyces cerevisiae (strain ATCC 204508 / S288c) (Baker's yeast), this protein is Ubiquitin-conjugating enzyme E2-24 kDa (UBC8).